A 95-amino-acid polypeptide reads, in one-letter code: uncharacterized protein (95 aa).

This is an uncharacterized protein from Sulfolobus islandicus rod-shaped virus 1 (SIRV-1).